We begin with the raw amino-acid sequence, 189 residues long: Photosystem I assembly protein Ycf4 (189 aa).

2 consecutive transmembrane segments (helical) span residues Ser25–Leu45 and Leu62–Gly82.

The protein belongs to the Ycf4 family.

Its subcellular location is the cellular thylakoid membrane. Its function is as follows. Seems to be required for the assembly of the photosystem I complex. In Synechococcus sp. (strain JA-3-3Ab) (Cyanobacteria bacterium Yellowstone A-Prime), this protein is Photosystem I assembly protein Ycf4.